Here is a 632-residue protein sequence, read N- to C-terminus: Extracellular metalloproteinase 2 (632 aa).

An N-terminal signal peptide occupies residues 1–19; sequence MHGLLLAGLAAALPLGVAG. The propeptide occupies 20 to 244; that stretch reads LPARQQSGLS…VHNVVDYVAS (225 aa). N270 carries an N-linked (GlcNAc...) asparagine glycan. Zn(2+) is bound at residue H429. E430 is a catalytic residue. H433 contacts Zn(2+).

The protein belongs to the peptidase M36 family. Zn(2+) is required as a cofactor.

The protein localises to the secreted. Its function is as follows. Secreted metalloproteinase that allows assimilation of proteinaceous substrates and probably acts as a virulence factor. This Arthroderma gypseum (strain ATCC MYA-4604 / CBS 118893) (Microsporum gypseum) protein is Extracellular metalloproteinase 2 (MEP2).